The primary structure comprises 302 residues: 33 kDa chaperonin (302 aa).

2 disulfide bridges follow: Cys-247–Cys-249 and Cys-280–Cys-283.

This sequence belongs to the HSP33 family. Post-translationally, under oxidizing conditions two disulfide bonds are formed involving the reactive cysteines. Under reducing conditions zinc is bound to the reactive cysteines and the protein is inactive.

The protein localises to the cytoplasm. Redox regulated molecular chaperone. Protects both thermally unfolding and oxidatively damaged proteins from irreversible aggregation. Plays an important role in the bacterial defense system toward oxidative stress. The polypeptide is 33 kDa chaperonin (Prochlorococcus marinus (strain MIT 9301)).